Reading from the N-terminus, the 460-residue chain is Argininosuccinate lyase (460 aa).

This sequence belongs to the lyase 1 family. Argininosuccinate lyase subfamily.

The protein resides in the cytoplasm. The catalysed reaction is 2-(N(omega)-L-arginino)succinate = fumarate + L-arginine. It functions in the pathway amino-acid biosynthesis; L-arginine biosynthesis; L-arginine from L-ornithine and carbamoyl phosphate: step 3/3. The chain is Argininosuccinate lyase from Solibacter usitatus (strain Ellin6076).